Reading from the N-terminus, the 98-residue chain is Omega-hexatoxin-Hr2b (98 aa).

Positions methionine 1 to cysteine 22 are cleaved as a signal peptide. Residues lysine 24 to arginine 56 constitute a propeptide that is removed on maturation. Cystine bridges form between cysteine 60–cysteine 74, cysteine 67–cysteine 80, and cysteine 73–cysteine 85. Leucine 97 is modified (leucine amide).

Belongs to the neurotoxin 15 family. 02 (omega-actx) subfamily. Expressed by the venom gland.

The protein resides in the secreted. Functionally, potent inhibitor of insect, but not mammalian, voltage-gated calcium channels (Cav). The sequence is that of Omega-hexatoxin-Hr2b from Atrax robustus (Sydney funnel-web spider).